Reading from the N-terminus, the 45-residue chain is Ice-structuring protein SS-8 (45 aa).

Met-1 carries the blocked amino end (Met) modification. Repeats lie at residues 9 to 21 (KAAR…ALAA), 22 to 33 (KTAADAAAKAAA), and 34 to 45 (KAAAIAAAAASA).

It belongs to the type-I AFP family.

In terms of biological role, antifreeze proteins lower the blood freezing point. The chain is Ice-structuring protein SS-8 from Myoxocephalus scorpius (Shorthorn sculpin).